The sequence spans 248 residues: Proteasome subunit alpha (248 aa).

The protein belongs to the peptidase T1A family. As to quaternary structure, the 20S proteasome core is composed of 14 alpha and 14 beta subunits that assemble into four stacked heptameric rings, resulting in a barrel-shaped structure. The two inner rings, each composed of seven catalytic beta subunits, are sandwiched by two outer rings, each composed of seven alpha subunits. The catalytic chamber with the active sites is on the inside of the barrel. Has a gated structure, the ends of the cylinder being occluded by the N-termini of the alpha-subunits. Is capped by the proteasome-associated ATPase, ARC.

The protein resides in the cytoplasm. The protein operates within protein degradation; proteasomal Pup-dependent pathway. The formation of the proteasomal ATPase ARC-20S proteasome complex, likely via the docking of the C-termini of ARC into the intersubunit pockets in the alpha-rings, may trigger opening of the gate for substrate entry. Interconversion between the open-gate and close-gate conformations leads to a dynamic regulation of the 20S proteasome proteolysis activity. Functionally, component of the proteasome core, a large protease complex with broad specificity involved in protein degradation. This is Proteasome subunit alpha from Mycobacterium bovis (strain BCG / Pasteur 1173P2).